A 238-amino-acid chain; its full sequence is Enolase-phosphatase E1 (238 aa).

This sequence belongs to the HAD-like hydrolase superfamily. MasA/MtnC family. In terms of assembly, monomer. The cofactor is Mg(2+).

The enzyme catalyses 5-methylsulfanyl-2,3-dioxopentyl phosphate + H2O = 1,2-dihydroxy-5-(methylsulfanyl)pent-1-en-3-one + phosphate. The protein operates within amino-acid biosynthesis; L-methionine biosynthesis via salvage pathway; L-methionine from S-methyl-5-thio-alpha-D-ribose 1-phosphate: step 3/6. It participates in amino-acid biosynthesis; L-methionine biosynthesis via salvage pathway; L-methionine from S-methyl-5-thio-alpha-D-ribose 1-phosphate: step 4/6. In terms of biological role, bifunctional enzyme that catalyzes the enolization of 2,3-diketo-5-methylthiopentyl-1-phosphate (DK-MTP-1-P) into the intermediate 2-hydroxy-3-keto-5-methylthiopentenyl-1-phosphate (HK-MTPenyl-1-P), which is then dephosphorylated to form the acireductone 1,2-dihydroxy-3-keto-5-methylthiopentene (DHK-MTPene). This is Enolase-phosphatase E1 from Synechococcus elongatus (strain ATCC 33912 / PCC 7942 / FACHB-805) (Anacystis nidulans R2).